Consider the following 146-residue polypeptide: Large ribosomal subunit protein uL15 (146 aa).

Positions 1–56 (MRLHDLRPVPGSRQKPTRKGQGIGSGLGKTAGRGQKGQKARSGGGVRPGFEGGQMP) are disordered. 2 stretches are compositionally biased toward gly residues: residues 21-35 (QGIG…GRGQ) and 42-52 (SGGGVRPGFEG).

This sequence belongs to the universal ribosomal protein uL15 family. As to quaternary structure, part of the 50S ribosomal subunit.

Binds to the 23S rRNA. The protein is Large ribosomal subunit protein uL15 of Carboxydothermus hydrogenoformans (strain ATCC BAA-161 / DSM 6008 / Z-2901).